Here is a 2514-residue protein sequence, read N- to C-terminus: Highly reducing polyketide synthase sphB (2514 aa).

The region spanning Gln-66–Ser-486 is the Ketosynthase family 3 (KS3) domain. Active-site for beta-ketoacyl synthase activity residues include Cys-238, His-374, and His-409. In terms of domain architecture, Malonyl-CoA:ACP transacylase (MAT) spans Met-580–Val-904. An N-terminal hotdog fold region spans residues His-950–Pro-1079. One can recognise a PKS/mFAS DH domain in the interval His-950–Ala-1240. The Proton acceptor; for dehydratase activity role is filled by His-982. A C-terminal hotdog fold region spans residues Pro-1089 to Ala-1240. Asp-1150 acts as the Proton donor; for dehydratase activity in catalysis. The interval Trp-1319–Val-1578 is methyltransferase (CMet) domain. The Enoyl reductase (ER) domain occupies Gly-1779–Val-2092. Residues Ala-2120 to Glu-2297 form the Ketoreductase (KR) domain. Residues Glu-2427–Val-2504 enclose the Carrier domain. At Ser-2464 the chain carries O-(pantetheine 4'-phosphoryl)serine.

Pantetheine 4'-phosphate serves as cofactor.

The enzyme catalyses holo-[ACP] + 8 malonyl-CoA + acetyl-CoA + 5 AH2 + 8 NADPH + 16 H(+) = (3R)-hydroxyoctadeca-4,10-dienoyl-[ACP] + 5 A + 8 CO2 + 8 NADP(+) + 9 CoA + 7 H2O. It functions in the pathway secondary metabolite biosynthesis. Functionally, highly reducing polyketide synthase; part of the gene cluster that mediates the biosynthesis of sphingofungins, bioactive molecules acting as sphingolipid inhibitors via inhibiting serine palmitoyl transferase (SPT). Within the pathway, sphB catalyzes the first step of sphingofungin biosynthesis by condensing 8 units of malonyl-CoA with one starter unit of acetyl-CoA, leading to an C18 polyketide precursor 3-hydroxyoctadeca-4,10-dienoyl-ACP containing one delta-6 desaturation and one delta-12 desaturation. The PKS sphB does not contain any putative thioesterase domain for releasing the nascent polyketide chain and it has been suggested that aminoacyl transferases can facilitate the polyketide chain release. The aminoacyl transferase sphA uses the sphB product to produce 3-keto-presphingofungin by adding an aminomalonate molecule. SphF then reduces the C-3 ketone of 3-keto-presphingofungin which leads to presphingofungin. The cytochrome P450 monooxygenase sphH converts presphingofungin into sphingofungin B1 which is further converted to sphingofungin B by the dioxygenase sphC. SphC is also able to convert presphingofungin into sphingofungin B2. The acetyltransferase sphE acetylates sphingofungin B to produce sphingofungin C, but can also convert sphingofungin B1 into sphingofungin C1 and sphingofungin B2 into sphingofungin C2. Finally, sphingofungin C can be spontaneously converted into sphingofungin D. This chain is Highly reducing polyketide synthase sphB, found in Aspergillus fumigatus (strain CBS 144.89 / FGSC A1163 / CEA10) (Neosartorya fumigata).